Consider the following 433-residue polypeptide: Ribosome biogenesis protein WDR12 homolog (433 aa).

The residue at position 1 (Met-1) is an N-acetylmethionine. A ubiquitin-like (UBL) domain region spans residues 12–96; sequence LHVKFVTKLD…ERTLEIEYIR (85 aa). 7 WD repeats span residues 108–146, 148–191, 203–242, 270–308, 310–350, 356–396, and 399–433; these read LHDD…SHIL, GHSG…SVDS, GHKA…SEGE, GHTQ…DSLN, FCGK…TSAP, SHSS…PLSV, and THND…IAIS. The disordered stretch occupies residues 238–263; the sequence is TSEGESVSVKKRKGNNQAEESQSEGE.

This sequence belongs to the WD repeat WDR12/YTM1 family. In terms of assembly, interacts with PES. Interacts with BOP1.

It localises to the nucleus. Its subcellular location is the nucleolus. It is found in the nucleoplasm. Required for maturation of ribosomal RNAs and formation of the large ribosomal subunit. This Arabidopsis thaliana (Mouse-ear cress) protein is Ribosome biogenesis protein WDR12 homolog.